The sequence spans 1386 residues: DNA-directed RNA polymerase subunit beta (1386 aa).

This sequence belongs to the RNA polymerase beta chain family. The RNAP catalytic core consists of 2 alpha, 1 beta, 1 beta' and 1 omega subunit. When a sigma factor is associated with the core the holoenzyme is formed, which can initiate transcription.

The catalysed reaction is RNA(n) + a ribonucleoside 5'-triphosphate = RNA(n+1) + diphosphate. Its function is as follows. DNA-dependent RNA polymerase catalyzes the transcription of DNA into RNA using the four ribonucleoside triphosphates as substrates. The protein is DNA-directed RNA polymerase subunit beta of Nitratiruptor sp. (strain SB155-2).